The following is a 213-amino-acid chain: MKFVILVLCLSFVNGYGIKRNVQEHDLKDSHEHPTMTWELLEKFVGNTLYITTPQVLALPLGAQIYCDEIEGFQCSWPGYKNYAHDHTDFHFNPSNPFYSFVDTFYVSLGDSADKIYLRVISATSREKMLNIGCHTSFSVNLPIGTQIYHDKDMKLLVEGRHLECAHRIYFVKYCPYHTHGYCFDDKLKVYDLKRVKSRKDFEKISQYQKSEL.

Positions 1-15 are cleaved as a signal peptide; it reads MKFVILVLCLSFVNG.

The protein is Non-structural protein 7b of Canis lupus familiaris (Dog).